Reading from the N-terminus, the 473-residue chain is Probable glucose-6-phosphate 1-dehydrogenase C7.13c (473 aa).

Arg-43, Tyr-121, and Lys-144 together coordinate NADP(+). Residues Lys-144, 174-178, Glu-213, and Asp-232 contribute to the D-glucose 6-phosphate site; that span reads HYTAK. Residue His-237 is the Proton acceptor of the active site. Lys-331 provides a ligand contact to D-glucose 6-phosphate. Lys-341 serves as a coordination point for NADP(+). Gln-366 lines the D-glucose 6-phosphate pocket.

The protein belongs to the glucose-6-phosphate dehydrogenase family.

Its subcellular location is the cytoplasm. The catalysed reaction is D-glucose 6-phosphate + NADP(+) = 6-phospho-D-glucono-1,5-lactone + NADPH + H(+). It functions in the pathway carbohydrate degradation; pentose phosphate pathway; D-ribulose 5-phosphate from D-glucose 6-phosphate (oxidative stage): step 1/3. Its function is as follows. Catalyzes the rate-limiting step of the oxidative pentose-phosphate pathway, which represents a route for the dissimilation of carbohydrates besides glycolysis. The main function of this enzyme is to provide reducing power (NADPH) and pentose phosphates for fatty acid and nucleic acid synthesis. This is Probable glucose-6-phosphate 1-dehydrogenase C7.13c from Schizosaccharomyces pombe (strain 972 / ATCC 24843) (Fission yeast).